The chain runs to 146 residues: UPF0742 protein SPAC977.02 (146 aa).

Residues 38 to 60 (LTVKYCLAVKLLIYLLYCWYIYS) traverse the membrane as a helical segment.

This sequence belongs to the UPF0742 family.

It is found in the cytoplasm. The protein localises to the nucleus membrane. The chain is UPF0742 protein SPAC977.02 from Schizosaccharomyces pombe (strain 972 / ATCC 24843) (Fission yeast).